A 220-amino-acid chain; its full sequence is Dual specificity phosphatase 29 (220 aa).

A Tyrosine-protein phosphatase domain is found at 54–202 (HVNEVWPKLY…LRELDKQLVQ (149 aa)). 146–153 (HCVMGRSR) provides a ligand contact to substrate. Residue cysteine 147 is the Phosphocysteine intermediate of the active site.

This sequence belongs to the protein-tyrosine phosphatase family. Non-receptor class dual specificity subfamily. As to quaternary structure, homodimer. Interacts with PRKAA2.

It localises to the cytoplasm. It is found in the nucleus. It catalyses the reaction O-phospho-L-tyrosyl-[protein] + H2O = L-tyrosyl-[protein] + phosphate. The enzyme catalyses O-phospho-L-seryl-[protein] + H2O = L-seryl-[protein] + phosphate. The catalysed reaction is O-phospho-L-threonyl-[protein] + H2O = L-threonyl-[protein] + phosphate. Dual specificity phosphatase able to dephosphorylate phosphotyrosine, phosphoserine and phosphothreonine residues within the same substrate, with a preference for phosphotyrosine as a substrate. Involved in the modulation of intracellular signaling cascades. In skeletal muscle regulates systemic glucose homeostasis by activating, AMPK, an energy sensor protein kinase. Affects MAP kinase signaling though modulation of the ERK1/2 cascade in skeletal muscle promoting muscle cell differentiation, development and atrophy. This chain is Dual specificity phosphatase 29 (DUSP29), found in Pan troglodytes (Chimpanzee).